The sequence spans 450 residues: Serine/threonine-protein kinase-transforming protein Rmil (450 aa).

Basic and acidic residues-rich tracts occupy residues 1–14 and 49–73; these read MEAV…DQGV and QRER…RDSS. A disordered region spans residues 1-80; the sequence is MEAVIKDLIR…DSSDDWEIPD (80 aa). One can recognise a Protein kinase domain in the interval 83-343; it reads ITVGQRIGSG…PQILASIELL (261 aa). Residues 89–97 and Lys109 contribute to the ATP site; that span reads IGSGSFGTV. The Proton acceptor role is filled by Asp202.

It belongs to the protein kinase superfamily. TKL Ser/Thr protein kinase family. RAF subfamily.

The enzyme catalyses L-seryl-[protein] + ATP = O-phospho-L-seryl-[protein] + ADP + H(+). It catalyses the reaction L-threonyl-[protein] + ATP = O-phospho-L-threonyl-[protein] + ADP + H(+). This is Serine/threonine-protein kinase-transforming protein Rmil (V-RMIL) from Avian rous-associated virus type 1.